A 235-amino-acid polypeptide reads, in one-letter code: Small ribosomal subunit protein uS3 (235 aa).

Residues 39–107 form the KH type-2 domain; it reads IREILHKELK…DVVINIVEIR (69 aa). The segment at 215-235 is disordered; it reads QDKRMAEGDGGGSSRPRRDAA.

The protein belongs to the universal ribosomal protein uS3 family. In terms of assembly, part of the 30S ribosomal subunit. Forms a tight complex with proteins S10 and S14.

In terms of biological role, binds the lower part of the 30S subunit head. Binds mRNA in the 70S ribosome, positioning it for translation. The polypeptide is Small ribosomal subunit protein uS3 (Rhodopseudomonas palustris (strain ATCC BAA-98 / CGA009)).